The primary structure comprises 658 residues: Alkyldihydroxyacetonephosphate synthase, peroxisomal (658 aa).

Over residues Met-1–Ala-24 the composition is skewed to low complexity. Residues Met-1–Arg-37 form a disordered region. A peroxisome-targeting transit peptide spans Met-1–Cys-58. A compositionally biased stretch (basic and acidic residues) spans Ala-25–Gly-35. Ser-65 bears the Phosphoserine mark. A Phosphothreonine modification is found at Thr-74. Lys-102 carries the N6-acetyllysine modification. The region spanning Phe-202–Thr-384 is the FAD-binding PCMH-type domain. Residues Pro-234 to Ser-240, Asp-303 to Thr-309, and Thr-316 to Ser-319 each bind FAD. Residue Lys-347 is modified to N6-acetyllysine. Glu-368–Ile-374 contributes to the FAD binding site. A substrate-binding site is contributed by Arg-515. The active-site Proton donor/acceptor is the Tyr-578. Important for enzyme activity regions lie at residues His-615–His-617 and Asn-654–Leu-658.

This sequence belongs to the FAD-binding oxidoreductase/transferase type 4 family. In terms of assembly, homodimer. Requires FAD as cofactor.

Its subcellular location is the peroxisome membrane. It is found in the peroxisome. It catalyses the reaction a long chain fatty alcohol + a 1-acylglycerone 3-phosphate = a 1-O-alkylglycerone 3-phosphate + a long-chain fatty acid + H(+). The catalysed reaction is hexadecan-1-ol + 1-hexadecanoylglycerone 3-phosphate = 1-O-hexadecylglycerone 3-phosphate + hexadecanoate + H(+). The enzyme catalyses 1-hexadecanoylglycerone 3-phosphate + a long-chain fatty acid = a 1-acylglycerone 3-phosphate + hexadecanoate. Its pathway is glycerolipid metabolism; ether lipid biosynthesis. Its activity is regulated as follows. Inhibited by N-ethylmaleimide, p-bromophenacylbromide, 2,4- dinitrofluorobenzene and divalent cations such as such as Mn(2+), Mg(2+) and Zn(2+). Inhibition by p-bromophenacylbromide is strongly pH dependent and is highest at alkaline conditions. Its function is as follows. Catalyzes the exchange of the acyl chain in acyl-dihydroxyacetonephosphate (acyl-DHAP) for a long chain fatty alcohol, yielding the first ether linked intermediate, i.e. alkyl-dihydroxyacetonephosphate (alkyl-DHAP), in the pathway of ether lipid biosynthesis. The chain is Alkyldihydroxyacetonephosphate synthase, peroxisomal (AGPS) from Cavia porcellus (Guinea pig).